The primary structure comprises 201 residues: Glycine-rich protein 23 (201 aa).

A signal peptide spans methionine 1–glycine 24. 21 consecutive repeat copies span residues glycine 62–glycine 67, glycine 68–glycine 73, glycine 74–glycine 79, glycine 80–glycine 85, glycine 86–glycine 91, glycine 92–glycine 97, glycine 98–serine 103, glycine 104–glycine 109, glycine 110–serine 115, glycine 116–glycine 121, glycine 122–glycine 129, glycine 130–glycine 135, glycine 136–glycine 143, glycine 144–glycine 151, glycine 152–glycine 157, glycine 158–glycine 163, glycine 164–glycine 169, glycine 170–glycine 175, glycine 176–glycine 182, glycine 184–glycine 189, and glycine 190–glycine 194. The tract at residues glycine 62 to glycine 194 is 21 X 6 AA approximate tandem repeats of G-L-G-G-G-G, Gly-rich.

The sequence is that of Glycine-rich protein 23 from Arabidopsis thaliana (Mouse-ear cress).